Consider the following 290-residue polypeptide: HTH-type transcriptional regulator BudR (290 aa).

The region spanning 1-58 (MELRYLRYFVAVAEARNFTRAAHDLGISQPPLSQQIQRLEREIGTPLLRRLTRGVELT) is the HTH lysR-type domain. Residues 18–37 (FTRAAHDLGISQPPLSQQIQ) constitute a DNA-binding region (H-T-H motif).

This sequence belongs to the LysR transcriptional regulatory family.

Functionally, regulator of the budABC operon for 2,3-butanediol synthesis. In Raoultella terrigena (Klebsiella terrigena), this protein is HTH-type transcriptional regulator BudR (budR).